The following is a 149-amino-acid chain: Transcriptional repressor NrdR (149 aa).

A zinc finger lies at Cys3–Cys34. The region spanning Pro49 to Glu139 is the ATP-cone domain.

It belongs to the NrdR family. Requires Zn(2+) as cofactor.

Its function is as follows. Negatively regulates transcription of bacterial ribonucleotide reductase nrd genes and operons by binding to NrdR-boxes. The sequence is that of Transcriptional repressor NrdR from Yersinia enterocolitica serotype O:8 / biotype 1B (strain NCTC 13174 / 8081).